The primary structure comprises 599 residues: Sulfite reductase [NADPH] flavoprotein alpha-component (599 aa).

Positions 64–202 (ITIISASQTG…AASEWRARVV (139 aa)) constitute a Flavodoxin-like domain. Residues 70–75 (SQTGNA), 117–120 (STQG), and 153–162 (LGDSSYEFFC) contribute to the FMN site. Positions 234–448 (DAPLVASLSV…IEHNDNFRLP (215 aa)) constitute an FAD-binding FR-type domain. Residues Thr-322, Ala-356, 386 to 389 (RLYS), 404 to 406 (TVG), Tyr-410, and 419 to 422 (GGAS) contribute to the FAD site. NADP(+) is bound by residues 519 to 520 (SR), 525 to 529 (KVYVQ), and Asp-561. Residue Tyr-599 participates in FAD binding.

The protein belongs to the NADPH-dependent sulphite reductase flavoprotein subunit CysJ family. It in the N-terminal section; belongs to the flavodoxin family. This sequence in the C-terminal section; belongs to the flavoprotein pyridine nucleotide cytochrome reductase family. In terms of assembly, alpha(8)-beta(8). The alpha component is a flavoprotein, the beta component is a hemoprotein. FAD is required as a cofactor. Requires FMN as cofactor.

It carries out the reaction hydrogen sulfide + 3 NADP(+) + 3 H2O = sulfite + 3 NADPH + 4 H(+). Its pathway is sulfur metabolism; hydrogen sulfide biosynthesis; hydrogen sulfide from sulfite (NADPH route): step 1/1. In terms of biological role, component of the sulfite reductase complex that catalyzes the 6-electron reduction of sulfite to sulfide. This is one of several activities required for the biosynthesis of L-cysteine from sulfate. The flavoprotein component catalyzes the electron flow from NADPH -&gt; FAD -&gt; FMN to the hemoprotein component. This is Sulfite reductase [NADPH] flavoprotein alpha-component from Shigella boydii serotype 4 (strain Sb227).